The primary structure comprises 306 residues: D-alanine--D-alanine ligase (306 aa).

In terms of domain architecture, ATP-grasp spans 106 to 301 (KLLWQSAGIN…FEELVLKILG (196 aa)). An ATP-binding site is contributed by 132–187 (AKELGLPLIVKPSREGSTIGLSKVREAGEVAAAWHLAARHDAMVLAEQFIEGTELT). The Mg(2+) site is built by aspartate 255, glutamate 268, and asparagine 270.

It belongs to the D-alanine--D-alanine ligase family. The cofactor is Mg(2+). Mn(2+) is required as a cofactor.

It localises to the cytoplasm. The catalysed reaction is 2 D-alanine + ATP = D-alanyl-D-alanine + ADP + phosphate + H(+). Its pathway is cell wall biogenesis; peptidoglycan biosynthesis. Its function is as follows. Cell wall formation. The sequence is that of D-alanine--D-alanine ligase from Nitrosospira multiformis (strain ATCC 25196 / NCIMB 11849 / C 71).